A 310-amino-acid polypeptide reads, in one-letter code: Mitochondrial thiamine pyrophosphate carrier 1 (310 aa).

A run of 6 helical transmembrane segments spans residues 16–32, 88–104, 117–141, 173–197, 218–234, and 274–291; these read VSPY…GGVA, ILYV…YSAL, IVMP…LTTY, GISG…LMFW, ICGF…TFPL, and GYGV…ISLW. 3 Solcar repeats span residues 16–107, 120–205, and 211–299; these read VSPY…LSKS, PSSV…AREF, and HVPF…VISA.

The protein belongs to the mitochondrial carrier (TC 2.A.29) family.

Its subcellular location is the mitochondrion inner membrane. Its function is as follows. Mitochondrial transporter that mediates uptake of thiamine pyrophosphate (ThPP) into mitochondria. The chain is Mitochondrial thiamine pyrophosphate carrier 1 (TPC1) from Lodderomyces elongisporus (strain ATCC 11503 / CBS 2605 / JCM 1781 / NBRC 1676 / NRRL YB-4239) (Yeast).